The chain runs to 397 residues: Geranylgeranyl pyrophosphate synthase AN1592 (397 aa).

The disordered stretch occupies residues 1 to 67 (MSPPLDSALE…SHDSSASSNI (67 aa)). The segment covering 13-42 (SEYKETAFPRTEKDPSQYKEHDLVTPEKEI) has biased composition (basic and acidic residues). Positions 52-67 (SHSSHGSHDSSASSNI) are enriched in low complexity. Positions 120, 123, and 152 each coordinate isopentenyl diphosphate. Aspartate 159 and aspartate 163 together coordinate Mg(2+). Residue arginine 168 participates in dimethylallyl diphosphate binding. Residue arginine 169 participates in isopentenyl diphosphate binding. 3 residues coordinate dimethylallyl diphosphate: lysine 247, threonine 248, and glutamine 281. Position 284 (aspartate 284) interacts with Mg(2+). Dimethylallyl diphosphate-binding residues include asparagine 288, lysine 298, and lysine 308.

This sequence belongs to the FPP/GGPP synthase family. Mg(2+) is required as a cofactor.

It carries out the reaction isopentenyl diphosphate + dimethylallyl diphosphate = (2E)-geranyl diphosphate + diphosphate. The catalysed reaction is isopentenyl diphosphate + (2E)-geranyl diphosphate = (2E,6E)-farnesyl diphosphate + diphosphate. It catalyses the reaction isopentenyl diphosphate + (2E,6E)-farnesyl diphosphate = (2E,6E,10E)-geranylgeranyl diphosphate + diphosphate. Its pathway is secondary metabolite biosynthesis; terpenoid biosynthesis. Geranylgeranyl pyrophosphate synthase; part of the gene cluster that mediates the biosynthesis of the diterpene ent-pimara-8(14),15-diene (PD). Within the cluster, the HMG-CoA reductase AN1593 functions in the mevalonate pathway, which produces isoprenoid precursors. The geranylgeranyl pyrophosphate (GGPP) synthase AN1592 is needed in the formation of GGPP, the precursor for diterpenes. Lastly, the pimaradiene synthase pbcA performs the 2 cyclization steps that convert GGPP to ent-pimara-8(14),15-diene. The putative roles of the remaining cluster enzymes in ent-pimara-8(14),15-diene biosynthesis is unclear. The cytochrome P450 monooxygenase AN1598, the glutathione S-transferase AN1595, the oxidoreductases AN1596 and AN1597 probably function as decorative enzymes. It is possible that in biological conditions the compound is oxidized to ent-pimara-8(14),15-dien-19-oic acid, which is a bioactive diterpene compound predominant in many plant extracts. The polypeptide is Geranylgeranyl pyrophosphate synthase AN1592 (Emericella nidulans (strain FGSC A4 / ATCC 38163 / CBS 112.46 / NRRL 194 / M139) (Aspergillus nidulans)).